A 141-amino-acid polypeptide reads, in one-letter code: Translation initiation factor 2 subunit beta (141 aa).

This sequence belongs to the eIF-2-beta/eIF-5 family. In terms of assembly, heterotrimer composed of an alpha, a beta and a gamma chain.

Functionally, eIF-2 functions in the early steps of protein synthesis by forming a ternary complex with GTP and initiator tRNA. The sequence is that of Translation initiation factor 2 subunit beta from Thermofilum pendens (strain DSM 2475 / Hrk 5).